Here is a 383-residue protein sequence, read N- to C-terminus: UPF0425 pyridoxal phosphate-dependent protein Msp_0916 (383 aa).

N6-(pyridoxal phosphate)lysine is present on lysine 207.

Belongs to the UPF0425 family. It depends on pyridoxal 5'-phosphate as a cofactor.

This is UPF0425 pyridoxal phosphate-dependent protein Msp_0916 from Methanosphaera stadtmanae (strain ATCC 43021 / DSM 3091 / JCM 11832 / MCB-3).